A 181-amino-acid chain; its full sequence is Lysozyme C (181 aa).

A signal peptide spans 1 to 19 (MRIAFFLLILSIIVGLAYG). Positions 139 to 181 (LTDSRPLGPFNVTEEEMDQLFIDHEIAMAQCEAEKTCNGFDLE) are excised as a propeptide.

It belongs to the dictyostelium lysozyme family. In terms of processing, contains six disulfide bonds.

The protein localises to the cytoplasmic vesicle lumen. The catalysed reaction is Hydrolysis of (1-&gt;4)-beta-linkages between N-acetylmuramic acid and N-acetyl-D-glucosamine residues in a peptidoglycan and between N-acetyl-D-glucosamine residues in chitodextrins.. Functionally, has antibacterial activity. The polypeptide is Lysozyme C (alyC) (Dictyostelium discoideum (Social amoeba)).